The primary structure comprises 323 residues: tRNA(Ile)-lysidine synthase (323 aa).

33-38 (SGGSDS) contacts ATP.

It belongs to the tRNA(Ile)-lysidine synthase family.

It is found in the cytoplasm. It catalyses the reaction cytidine(34) in tRNA(Ile2) + L-lysine + ATP = lysidine(34) in tRNA(Ile2) + AMP + diphosphate + H(+). Functionally, ligates lysine onto the cytidine present at position 34 of the AUA codon-specific tRNA(Ile) that contains the anticodon CAU, in an ATP-dependent manner. Cytidine is converted to lysidine, thus changing the amino acid specificity of the tRNA from methionine to isoleucine. In Mycobacterium leprae (strain TN), this protein is tRNA(Ile)-lysidine synthase.